We begin with the raw amino-acid sequence, 150 residues long: Large ribosomal subunit protein bL9 (150 aa).

This sequence belongs to the bacterial ribosomal protein bL9 family.

Functionally, binds to the 23S rRNA. This is Large ribosomal subunit protein bL9 from Moorella thermoacetica (strain ATCC 39073 / JCM 9320).